The chain runs to 66 residues: Large ribosomal subunit protein uL29 (66 aa).

The protein belongs to the universal ribosomal protein uL29 family.

In Lachnospira eligens (strain ATCC 27750 / DSM 3376 / VPI C15-48 / C15-B4) (Eubacterium eligens), this protein is Large ribosomal subunit protein uL29.